We begin with the raw amino-acid sequence, 125 residues long: Holo-[acyl-carrier-protein] synthase (125 aa).

Residues Asp-8 and Glu-56 each coordinate Mg(2+).

The protein belongs to the P-Pant transferase superfamily. AcpS family. Mg(2+) serves as cofactor.

The protein localises to the cytoplasm. It catalyses the reaction apo-[ACP] + CoA = holo-[ACP] + adenosine 3',5'-bisphosphate + H(+). In terms of biological role, transfers the 4'-phosphopantetheine moiety from coenzyme A to a Ser of acyl-carrier-protein. The sequence is that of Holo-[acyl-carrier-protein] synthase from Borrelia hermsii (strain HS1 / DAH).